We begin with the raw amino-acid sequence, 675 residues long: Heat shock 70 kDa protein 12A (675 aa).

Residues 1-45 form a disordered region; sequence MADKEAGGGDAGPRETAPTSTYSSPARSLGDTGITPLSPSHILND. The residue at position 2 (alanine 2) is an N-acetylalanine. Polar residues predominate over residues 17–26; that stretch reads APTSTYSSPA.

The protein belongs to the heat shock protein 70 family. As to quaternary structure, interacts with SORL1 (via cytosolic C-terminus); this interaction affects SORL1 internalization and subcellular localization. In terms of tissue distribution, expressed most strongly in brain, kidney and heart with little or no expression in other tissues. In the brain, expressed in glial cells, including astrocytes (at protein level). In the aorta, preferentially expressed in lesions.

The protein localises to the cytoplasm. The protein resides in the nucleus. Adapter protein for SORL1, but not SORT1. Delays SORL1 internalization and affects SORL1 subcellular localization. The chain is Heat shock 70 kDa protein 12A (Hspa12a) from Mus musculus (Mouse).